A 479-amino-acid polypeptide reads, in one-letter code: Glutamate--tRNA ligase (479 aa).

The short motif at 9 to 19 is the 'HIGH' region element; the sequence is PSPTGNLHIGT. The 'KMSKS' region signature appears at 243–247; sequence KLSKR. Lys-246 provides a ligand contact to ATP.

It belongs to the class-I aminoacyl-tRNA synthetase family. Glutamate--tRNA ligase type 1 subfamily. As to quaternary structure, monomer.

It is found in the cytoplasm. The enzyme catalyses tRNA(Glu) + L-glutamate + ATP = L-glutamyl-tRNA(Glu) + AMP + diphosphate. In terms of biological role, catalyzes the attachment of glutamate to tRNA(Glu) in a two-step reaction: glutamate is first activated by ATP to form Glu-AMP and then transferred to the acceptor end of tRNA(Glu). In Synechococcus sp. (strain JA-2-3B'a(2-13)) (Cyanobacteria bacterium Yellowstone B-Prime), this protein is Glutamate--tRNA ligase.